A 594-amino-acid chain; its full sequence is MPIQILPPILANQIAAGEVVERPASVIKELVENSLDAGANRIDVELEKGGCQLIRVRDNGGGICGTELALALARHATSKVATLDDLEHIASLGFRGEALASISSVSRLTLTSRTAGQHEAWQAYAEGREMAVTVKPAAHPVGTTVEVLDLFFNTPARRRFLRSEKTEFAHIDELLRRLALSRFDVAINLKHNGKLLRQYRPAQTESQQEQRVVQACGAEFMQAALRIDSEHLGLHLYGWLAPQPLTAINEVQYCYVNGRMIRDKLLNHAIRQAYSECTGTSFQPAYILYLELDPHQVDVNVHPSKHEVRFHESRQVHDFIVQVIRQALQTAYSENAPDAVFSGIEDAAPDYPVSPLKNRATGQHQYSAPTGGYSSPSGSQLRSYGQLLTSELPSIPVSREAGSVAAPDNSDWPVLRLIQQRYLLSAQDDTLYLSDLVAIQSLQWLTQCNASFNEGLIAQPLLIPQRLDIARPHEWLAEYGIWLQKLGLRYNTHKNKQIIIQAVPALLRQTDMASTIPAMLSLLERYPVALSHQEWHSFIATWLKLPGLIPHHYSMDSARSLWLWLQQNVADWQNNTQLMRSVDLTNILEVFSRD.

Belongs to the DNA mismatch repair MutL/HexB family.

Functionally, this protein is involved in the repair of mismatches in DNA. It is required for dam-dependent methyl-directed DNA mismatch repair. May act as a 'molecular matchmaker', a protein that promotes the formation of a stable complex between two or more DNA-binding proteins in an ATP-dependent manner without itself being part of a final effector complex. This chain is DNA mismatch repair protein MutL, found in Tolumonas auensis (strain DSM 9187 / NBRC 110442 / TA 4).